The sequence spans 106 residues: UPF0642 protein YBL028C (106 aa).

Residues 1–12 (MAKSLRASSHLN) are compositionally biased toward polar residues. Disordered regions lie at residues 1 to 21 (MAKS…RRGV) and 52 to 106 (KEEQ…FTRF). Over residues 62-72 (DEKKSNEEAPR) the composition is skewed to basic and acidic residues. A compositionally biased stretch (basic residues) spans 83–106 (GRHHTYKKAKLMKQSKKKTSFTRF).

The protein belongs to the UPF0642 family.

The chain is UPF0642 protein YBL028C from Saccharomyces cerevisiae (strain ATCC 204508 / S288c) (Baker's yeast).